The sequence spans 266 residues: Cysteine-rich repeat secretory protein 41 (266 aa).

A signal peptide spans 1 to 26 (MSSVFGSVHILAMIAIQLLLTHSVSS). Gnk2-homologous domains lie at 33 to 136 (YLHH…SVAS) and 142 to 253 (YEND…LYPF).

This sequence belongs to the cysteine-rich repeat secretory protein family.

The protein resides in the secreted. This Arabidopsis thaliana (Mouse-ear cress) protein is Cysteine-rich repeat secretory protein 41 (CRRSP41).